The following is a 215-amino-acid chain: MSKVYDWFEERLEIQAIADDITSKYVPPHVNIFYCLGGITLTCFLVQVATGFAMTFYYRPTVTEAFASVQYIMTEANFGWLIRSVHRWSASMMVLMMILHVFRVYLTGGFKKPRELTWVTGVVLGVLTASFGVTGYSLPRDQIGYWAVKIVTGVPEAIPVIGSPLVELLRGSASVGQSTLTRFYSLHTFVLPLLTAVFMLMHFPMIRKQGISGPL.

The helical transmembrane segment at isoleucine 32 to phenylalanine 52 threads the bilayer. Cysteine 35 is a heme c binding site. Heme b-binding residues include histidine 86 and histidine 100. The next 3 helical transmembrane spans lie at alanine 90–phenylalanine 110, leucine 116–tyrosine 136, and leucine 186–isoleucine 206. The heme b site is built by histidine 187 and histidine 202.

This sequence belongs to the cytochrome b family. PetB subfamily. As to quaternary structure, the 4 large subunits of the cytochrome b6-f complex are cytochrome b6, subunit IV (17 kDa polypeptide, PetD), cytochrome f and the Rieske protein, while the 4 small subunits are PetG, PetL, PetM and PetN. The complex functions as a dimer. Requires heme b as cofactor. Heme c is required as a cofactor.

It is found in the plastid. It localises to the chloroplast thylakoid membrane. Functionally, component of the cytochrome b6-f complex, which mediates electron transfer between photosystem II (PSII) and photosystem I (PSI), cyclic electron flow around PSI, and state transitions. The polypeptide is Cytochrome b6 (Vitis vinifera (Grape)).